Reading from the N-terminus, the 227-residue chain is PKHD-type hydroxylase Reut_B4660 (227 aa).

Positions 78–178 (KVFPPLFNRY…RVSSFFWIQS (101 aa)) constitute a Fe2OG dioxygenase domain. His96, Asp98, and His159 together coordinate Fe cation. Arg169 is a 2-oxoglutarate binding site.

Fe(2+) is required as a cofactor. The cofactor is L-ascorbate.

The protein is PKHD-type hydroxylase Reut_B4660 of Cupriavidus pinatubonensis (strain JMP 134 / LMG 1197) (Cupriavidus necator (strain JMP 134)).